A 375-amino-acid chain; its full sequence is 2-oxoglutarate synthase subunit KorA (375 aa).

As to quaternary structure, heterotetramer of the KorA, KorB, KorC and KorD subunits.

The enzyme catalyses 2 oxidized [2Fe-2S]-[ferredoxin] + 2-oxoglutarate + CoA = succinyl-CoA + 2 reduced [2Fe-2S]-[ferredoxin] + CO2 + H(+). This Methanothermobacter marburgensis (strain ATCC BAA-927 / DSM 2133 / JCM 14651 / NBRC 100331 / OCM 82 / Marburg) (Methanobacterium thermoautotrophicum) protein is 2-oxoglutarate synthase subunit KorA (korA).